A 260-amino-acid chain; its full sequence is MSQQRPDRIKQMLHYLWQHRHLSTQQAMELFGYAEATVRRDFQYIVNQYPGMIRGHGCLDFDDSTDDKEYVFDVKRTLQSVAKREIAALARTMIKDGDCFFLDSGSTCLELAKCLADARVKVICNDIKIANELGCFPHVESYIIGGLIRPGYFSVGESLALEMINAFSVERAFISCDALSLETGITNATMFEVGVKTRIIQRSREVILMADHSKFDAVEPHAVATLSCIKTIISDSGLPETIAQRYQRAGCQLFLPHSIK.

The region spanning 5–61 (RPDRIKQMLHYLWQHRHLSTQQAMELFGYAEATVRRDFQYIVNQYPGMIRGHGCLDF) is the HTH deoR-type domain. Residues 22–41 (LSTQQAMELFGYAEATVRRD) constitute a DNA-binding region (H-T-H motif).

Its function is as follows. Putative transcriptional regulator for the sgcREAQCX region. The polypeptide is Putative sgc region transcriptional regulator (sgcR) (Escherichia coli (strain K12)).